The sequence spans 314 residues: tRNA-cytidine(32) 2-sulfurtransferase (314 aa).

The PP-loop motif signature appears at 39–44 (SGGKDS). Residues C114, C117, and C205 each contribute to the [4Fe-4S] cluster site.

The protein belongs to the TtcA family. As to quaternary structure, homodimer. Requires Mg(2+) as cofactor. [4Fe-4S] cluster serves as cofactor.

It is found in the cytoplasm. The catalysed reaction is cytidine(32) in tRNA + S-sulfanyl-L-cysteinyl-[cysteine desulfurase] + AH2 + ATP = 2-thiocytidine(32) in tRNA + L-cysteinyl-[cysteine desulfurase] + A + AMP + diphosphate + H(+). It functions in the pathway tRNA modification. Catalyzes the ATP-dependent 2-thiolation of cytidine in position 32 of tRNA, to form 2-thiocytidine (s(2)C32). The sulfur atoms are provided by the cysteine/cysteine desulfurase (IscS) system. The protein is tRNA-cytidine(32) 2-sulfurtransferase of Cupriavidus metallidurans (strain ATCC 43123 / DSM 2839 / NBRC 102507 / CH34) (Ralstonia metallidurans).